Here is a 351-residue protein sequence, read N- to C-terminus: MALSSWIFFLLVHGIVGGSRTCFPGCRCIVDNFGLFHSFSLTKVDCSRVGPHVVPVSIPLDTSYLDLSSNRLKRINESVLSGPGYTTLMNLNLSYNQIVKISYSTFSKLRYLESLDLSHNLLETLPDGSFLYSRLTELDLSSNKIQKVGVGAFTLKSQGRSMTINLANNEIHSIFRGAERPVPNIHSLMLYGNQLLSVPDLHGIPLRHLNLDRNPLSKIEKVSFLGLESLTHLSLSDLPNLREVSPYSFKSLTSLLELDLSNNPNLKSLSSDMFFGLKALQELNLAYSGVASLPKDIMLHLPSMKSITWGENIRCLKTVKESIFHAQKGRVRKEVLLCHDDNGAVPAQDIL.

The first 17 residues, 1 to 17 (MALSSWIFFLLVHGIVG), serve as a signal peptide directing secretion. LRR repeat units lie at residues 59 to 82 (PLDT…VLSG), 85 to 108 (YTTL…TFSK), 109 to 132 (LRYL…SFLY), 134 to 155 (RLTE…AFTL), 158 to 181 (QGRS…AERP), 182 to 203 (VPNI…DLHG), 204 to 226 (IPLR…SFLG), 252 to 276 (LTSL…MFFG), and 277 to 300 (LKAL…IMLH).

Interacts with bmp4. Interacts with dll1 (via extracellular region). Interacts with fgf8; inhibits fgf8 signaling. Interacts with nodal2/Xnr2; enhances nodal2 activity. During embryogenesis, localized to the animal hemisphere during late blastula and gastrula stages. At stage 10, expression is also detected around the dorsal blastopore lip. Expressed in the mandibular crest segment, branchial crest segment and differentiating somites at stage 21/22. Expressed in the germ ring including the shield at shield stage and in the tailbud at the 10-somite stage. At the early neurula stage (stage 13), expression is hardly detectable in the presumptive neural plate region, and restricted to the non-neural ectoderm where its levels increase by stage 14, especially in the presumptive anterior neural fold. Also expressed in the prospective cranial neural crest. At the early tailbud stage (stage 23), expressed in cranial neural crest cells, the dorsal retina and the lens placode.

Its subcellular location is the secreted. In terms of biological role, contributes to various developmental events through its interactions with multiple signaling pathways. Dorsalizing factor which functions as an inhibitor of bone morphogenetic proteins (BMP) during gastrulation. Promotes dll1-dependent activation of Notch signaling and is required for neural crest formation. Induces endoderm and dorsal mesoderm formation by enhancing nodal2/Xnr2 activity while inhibiting ventrolateral mesoderm formation through inhibition of fgf8. In Xenopus laevis (African clawed frog), this protein is Tsukushi-A.